The sequence spans 224 residues: Phosphoglycolate phosphatase (224 aa).

The Nucleophile role is filled by Asp-8. Residues Asp-8 and Asp-10 each coordinate Mg(2+). Lys-151 is a binding site for substrate. Positions 174 and 178 each coordinate Mg(2+).

This sequence belongs to the archaeal SPP-like hydrolase family. Mg(2+) serves as cofactor.

It carries out the reaction 2-phosphoglycolate + H2O = glycolate + phosphate. Functionally, catalyzes the dephosphorylation of 2-phosphoglycolate. This chain is Phosphoglycolate phosphatase, found in Thermoplasma volcanium (strain ATCC 51530 / DSM 4299 / JCM 9571 / NBRC 15438 / GSS1).